Consider the following 250-residue polypeptide: Type III pantothenate kinase (250 aa).

6 to 13 contributes to the ATP binding site; the sequence is DVGNTNTV. 103-106 is a substrate binding site; that stretch reads GADR. Asp-105 acts as the Proton acceptor in catalysis. Position 125 (Asp-125) interacts with K(+). Residue Thr-128 participates in ATP binding. Residue Thr-180 participates in substrate binding.

The protein belongs to the type III pantothenate kinase family. As to quaternary structure, homodimer. Requires NH4(+) as cofactor. The cofactor is K(+).

The protein resides in the cytoplasm. The catalysed reaction is (R)-pantothenate + ATP = (R)-4'-phosphopantothenate + ADP + H(+). It participates in cofactor biosynthesis; coenzyme A biosynthesis; CoA from (R)-pantothenate: step 1/5. In terms of biological role, catalyzes the phosphorylation of pantothenate (Pan), the first step in CoA biosynthesis. The sequence is that of Type III pantothenate kinase from Frankia alni (strain DSM 45986 / CECT 9034 / ACN14a).